The sequence spans 438 residues: Lipid-A-disaccharide synthase (438 aa).

Belongs to the LpxB family.

The enzyme catalyses a lipid X + a UDP-2-N,3-O-bis[(3R)-3-hydroxyacyl]-alpha-D-glucosamine = a lipid A disaccharide + UDP + H(+). The protein operates within bacterial outer membrane biogenesis; LPS lipid A biosynthesis. Its function is as follows. Condensation of UDP-2,3-diacylglucosamine and 2,3-diacylglucosamine-1-phosphate to form lipid A disaccharide, a precursor of lipid A, a phosphorylated glycolipid that anchors the lipopolysaccharide to the outer membrane of the cell. This chain is Lipid-A-disaccharide synthase, found in Xanthomonas campestris pv. campestris (strain 8004).